The sequence spans 400 residues: Formate-dependent phosphoribosylglycinamide formyltransferase (400 aa).

Residues 22–23 (EL) and E82 each bind N(1)-(5-phospho-beta-D-ribosyl)glycinamide. ATP is bound by residues R115, K156, 161–166 (SSGKGQ), 196–199 (EGFI), and E204. The region spanning 120–309 (RLAAETLGLP…EFALHARAIL (190 aa)) is the ATP-grasp domain. 2 residues coordinate Mg(2+): E268 and E280. N(1)-(5-phospho-beta-D-ribosyl)glycinamide is bound by residues D287, K361, and 368–369 (RR).

It belongs to the PurK/PurT family. In terms of assembly, homodimer.

The enzyme catalyses N(1)-(5-phospho-beta-D-ribosyl)glycinamide + formate + ATP = N(2)-formyl-N(1)-(5-phospho-beta-D-ribosyl)glycinamide + ADP + phosphate + H(+). It functions in the pathway purine metabolism; IMP biosynthesis via de novo pathway; N(2)-formyl-N(1)-(5-phospho-D-ribosyl)glycinamide from N(1)-(5-phospho-D-ribosyl)glycinamide (formate route): step 1/1. Functionally, involved in the de novo purine biosynthesis. Catalyzes the transfer of formate to 5-phospho-ribosyl-glycinamide (GAR), producing 5-phospho-ribosyl-N-formylglycinamide (FGAR). Formate is provided by PurU via hydrolysis of 10-formyl-tetrahydrofolate. This Xanthomonas oryzae pv. oryzae (strain KACC10331 / KXO85) protein is Formate-dependent phosphoribosylglycinamide formyltransferase.